Consider the following 288-residue polypeptide: Acetyl-coenzyme A carboxylase carboxyl transferase subunit beta, chloroplastic (288 aa).

The CoA carboxyltransferase N-terminal domain occupies Leu-30–Lys-288. Residues Cys-34, Cys-37, Cys-53, and Cys-56 each contribute to the Zn(2+) site. Residues Cys-34–Cys-56 form a C4-type zinc finger.

This sequence belongs to the AccD/PCCB family. As to quaternary structure, acetyl-CoA carboxylase is a heterohexamer composed of biotin carboxyl carrier protein, biotin carboxylase and 2 subunits each of ACCase subunit alpha and ACCase plastid-coded subunit beta (accD). The cofactor is Zn(2+).

The protein resides in the plastid. Its subcellular location is the chloroplast stroma. It catalyses the reaction N(6)-carboxybiotinyl-L-lysyl-[protein] + acetyl-CoA = N(6)-biotinyl-L-lysyl-[protein] + malonyl-CoA. The protein operates within lipid metabolism; malonyl-CoA biosynthesis; malonyl-CoA from acetyl-CoA: step 1/1. Component of the acetyl coenzyme A carboxylase (ACC) complex. Biotin carboxylase (BC) catalyzes the carboxylation of biotin on its carrier protein (BCCP) and then the CO(2) group is transferred by the transcarboxylase to acetyl-CoA to form malonyl-CoA. The protein is Acetyl-coenzyme A carboxylase carboxyl transferase subunit beta, chloroplastic of Pyropia yezoensis (Susabi-nori).